The primary structure comprises 718 residues: Methionine--tRNA ligase (718 aa).

Positions 12–22 (PYANGDIHLGH) match the 'HIGH' region motif. Residues Cys143, Cys146, Cys156, and Cys159 each coordinate Zn(2+). The 'KMSKS' region signature appears at 349-353 (KMSKS). Lys352 contacts ATP. Positions 573 to 599 (AAPAAKVASSQQRHAEKQQHEAQSAET) are disordered. The 111-residue stretch at 608 to 718 (DFTKVDLRIA…TGAASGMRVK (111 aa)) folds into the tRNA-binding domain.

It belongs to the class-I aminoacyl-tRNA synthetase family. MetG type 1 subfamily. Homodimer. Zn(2+) serves as cofactor.

The protein localises to the cytoplasm. It catalyses the reaction tRNA(Met) + L-methionine + ATP = L-methionyl-tRNA(Met) + AMP + diphosphate. In terms of biological role, is required not only for elongation of protein synthesis but also for the initiation of all mRNA translation through initiator tRNA(fMet) aminoacylation. The polypeptide is Methionine--tRNA ligase (Aromatoleum aromaticum (strain DSM 19018 / LMG 30748 / EbN1) (Azoarcus sp. (strain EbN1))).